The chain runs to 290 residues: Pirin (290 aa).

Positions 56, 58, 101, and 103 each coordinate Fe cation.

Belongs to the pirin family. In terms of assembly, may interact with NF1/CTF1. Interacts with BCL3. Identified in a complex comprised of PIR, BLC3, NFKB1 and target DNA. The cofactor is Fe cation. As to expression, highly expressed in a subset of melanomas. Detected at very low levels in most tissues (at protein level). Expressed in all tissues, with highest level of expression in heart and liver.

The protein localises to the nucleus. Its subcellular location is the cytoplasm. The enzyme catalyses quercetin + O2 = 2-(3,4-dihydroxybenzoyloxy)-4,6-dihydroxybenzoate + CO. It functions in the pathway flavonoid metabolism; quercetin degradation. Inhibited by kojic acid, sodium diethyldithiocarbamate and 1,10-phenanthroline monohydrochloride. Its function is as follows. Transcriptional coregulator of NF-kappa-B which facilitates binding of NF-kappa-B proteins to target kappa-B genes in a redox-state-dependent manner. May be required for efficient terminal myeloid maturation of hematopoietic cells. Has quercetin 2,3-dioxygenase activity (in vitro). The protein is Pirin (PIR) of Homo sapiens (Human).